Here is a 284-residue protein sequence, read N- to C-terminus: Bifunctional protein FolD 1 (284 aa).

Residues 166–168 (GAS) and isoleucine 232 contribute to the NADP(+) site.

The protein belongs to the tetrahydrofolate dehydrogenase/cyclohydrolase family. In terms of assembly, homodimer.

It catalyses the reaction (6R)-5,10-methylene-5,6,7,8-tetrahydrofolate + NADP(+) = (6R)-5,10-methenyltetrahydrofolate + NADPH. It carries out the reaction (6R)-5,10-methenyltetrahydrofolate + H2O = (6R)-10-formyltetrahydrofolate + H(+). It functions in the pathway one-carbon metabolism; tetrahydrofolate interconversion. In terms of biological role, catalyzes the oxidation of 5,10-methylenetetrahydrofolate to 5,10-methenyltetrahydrofolate and then the hydrolysis of 5,10-methenyltetrahydrofolate to 10-formyltetrahydrofolate. In Pseudomonas syringae pv. syringae (strain B728a), this protein is Bifunctional protein FolD 1.